A 243-amino-acid chain; its full sequence is DUF724 domain-containing protein 5 (243 aa).

Residues 1–24 (MREKHYSEDNSRKRKRGELEHNSD) show a composition bias toward basic and acidic residues. The disordered stretch occupies residues 1–51 (MREKHYSEDNSRKRKRGELEHNSDLNETVLPSDWTPDPVKNFAADDDDEET). Residues 59-243 (VLPFVKKSPV…DLGVELEDVE (185 aa)) form the DUF724 domain. Residues 174–223 (KEMKDESSKKHKAEQEFGEMERKILEVKNKVLELQKQEAALEKQKDATYE) adopt a coiled-coil conformation.

In terms of assembly, homodimer. In terms of tissue distribution, expressed in leaves, flowers and siliques.

The protein resides in the nucleus. Its function is as follows. May be involved in the polar growth of plant cells via transportation of RNAs. The sequence is that of DUF724 domain-containing protein 5 from Arabidopsis thaliana (Mouse-ear cress).